We begin with the raw amino-acid sequence, 238 residues long: tRNA1(Val) (adenine(37)-N6)-methyltransferase (238 aa).

Belongs to the methyltransferase superfamily. tRNA (adenine-N(6)-)-methyltransferase family.

It is found in the cytoplasm. The catalysed reaction is adenosine(37) in tRNA1(Val) + S-adenosyl-L-methionine = N(6)-methyladenosine(37) in tRNA1(Val) + S-adenosyl-L-homocysteine + H(+). Functionally, specifically methylates the adenine in position 37 of tRNA(1)(Val) (anticodon cmo5UAC). In Cytophaga hutchinsonii (strain ATCC 33406 / DSM 1761 / CIP 103989 / NBRC 15051 / NCIMB 9469 / D465), this protein is tRNA1(Val) (adenine(37)-N6)-methyltransferase.